The following is a 260-amino-acid chain: Thiazole synthase (260 aa).

Lys96 functions as the Schiff-base intermediate with DXP in the catalytic mechanism. 1-deoxy-D-xylulose 5-phosphate-binding positions include Gly157, 184–185 (AG), and 206–207 (NT).

The protein belongs to the ThiG family. As to quaternary structure, homotetramer. Forms heterodimers with either ThiH or ThiS.

The protein resides in the cytoplasm. The enzyme catalyses [ThiS sulfur-carrier protein]-C-terminal-Gly-aminoethanethioate + 2-iminoacetate + 1-deoxy-D-xylulose 5-phosphate = [ThiS sulfur-carrier protein]-C-terminal Gly-Gly + 2-[(2R,5Z)-2-carboxy-4-methylthiazol-5(2H)-ylidene]ethyl phosphate + 2 H2O + H(+). Its pathway is cofactor biosynthesis; thiamine diphosphate biosynthesis. Its function is as follows. Catalyzes the rearrangement of 1-deoxy-D-xylulose 5-phosphate (DXP) to produce the thiazole phosphate moiety of thiamine. Sulfur is provided by the thiocarboxylate moiety of the carrier protein ThiS. In vitro, sulfur can be provided by H(2)S. The sequence is that of Thiazole synthase from Bradyrhizobium sp. (strain ORS 278).